The chain runs to 419 residues: Transcription termination factor Rho (419 aa).

One can recognise a Rho RNA-BD domain in the interval 48–123 (GFTCSGTLEI…VRLDSINGDH (76 aa)). Residues 169–174 (GKGQRA), 181–186 (KIGKTV), and Arg-212 contribute to the ATP site.

Belongs to the Rho family. As to quaternary structure, homohexamer. The homohexamer assembles into an open ring structure.

Functionally, facilitates transcription termination by a mechanism that involves Rho binding to the nascent RNA, activation of Rho's RNA-dependent ATPase activity, and release of the mRNA from the DNA template. In Neisseria gonorrhoeae, this protein is Transcription termination factor Rho.